A 341-amino-acid chain; its full sequence is Type II methyltransferase M.NgoPII (341 aa).

Positions 12–341 (MKIISLFSGC…AAAIKKTLER (330 aa)) constitute an SAM-dependent MTase C5-type domain. The active site involves cysteine 84.

Belongs to the class I-like SAM-binding methyltransferase superfamily. C5-methyltransferase family.

The catalysed reaction is a 2'-deoxycytidine in DNA + S-adenosyl-L-methionine = a 5-methyl-2'-deoxycytidine in DNA + S-adenosyl-L-homocysteine + H(+). Its function is as follows. A methylase that recognizes the double-stranded sequence 5'-GGCC-3', methylates C-3 on both strands, and protects the DNA from cleavage by the NgoPII endonuclease. The protein is Type II methyltransferase M.NgoPII (ngoPIIM) of Neisseria gonorrhoeae.